The primary structure comprises 410 residues: Lissencephaly-1 homolog (410 aa).

The 33-residue stretch at 7-39 (QRDELNRAIADYLRSNGYEEAYSTFKKEAELDN) folds into the LisH domain. Positions 32-82 (KKEAELDNNEELDKKYAGLLEKKWTSVIRLQKKVMELESKLNEAKEEITLG) form a coiled coil. WD repeat units follow at residues 106–147 (GHRS…RTLK), 148–189 (GHTD…RTMH), 190–229 (GHDH…CVKT), 232–271 (GHRE…CKAE), 274–333 (EHEH…CLMT), 336–375 (GHDN…CMKT), and 378–410 (AHEH…WECR).

It belongs to the WD repeat LIS1/nudF family. As to quaternary structure, can self-associate. Component of the cytosolic PAF-AH (I) heterotetrameric enzyme, which is composed of PAFAH1B1 (beta), PAFAH1B2 (alpha2) and PAFAH1B3 (alpha1) subunits. The catalytic activity of the enzyme resides in the alpha1 (PAFAH1B3) and alpha2 (PAFAH1B2) subunits, whereas the beta subunit (PAFAH1B1) has regulatory activity. Trimer formation is not essential for the catalytic activity. Interacts with dynein, dynactin, nde1 and ndel1.

It is found in the cytoplasm. The protein resides in the cytoskeleton. The protein localises to the microtubule organizing center. Its subcellular location is the centrosome. Regulatory subunit (beta subunit) of the cytosolic type I platelet-activating factor (PAF) acetylhydrolase (PAF-AH (I)), an enzyme that catalyzes the hydrolyze of the acetyl group at the sn-2 position of PAF and its analogs and participates in the PAF inactivation. Positively regulates the activity of the minus-end directed microtubule motor protein dynein. May enhance dynein-mediated microtubule sliding by targeting dynein to the microtubule plus end. Required for several dynein- and microtubule-dependent processes such as the maintenance of Golgi integrity, the peripheral transport of microtubule fragments and the coupling of the nucleus and centrosome. May be required for proliferation of neuronal precursors and neuronal migration. This is Lissencephaly-1 homolog (pafah1b1) from Tetraodon nigroviridis (Spotted green pufferfish).